Here is a 383-residue protein sequence, read N- to C-terminus: Acetylornithine deacetylase (383 aa).

His-80 is a binding site for Zn(2+). The active site involves Asp-82. Asp-112 lines the Zn(2+) pocket. Residue Glu-144 is part of the active site. Glu-145, Glu-169, and His-355 together coordinate Zn(2+).

This sequence belongs to the peptidase M20A family. ArgE subfamily. In terms of assembly, homodimer. It depends on Zn(2+) as a cofactor. Co(2+) serves as cofactor. Requires glutathione as cofactor.

Its subcellular location is the cytoplasm. The enzyme catalyses N(2)-acetyl-L-ornithine + H2O = L-ornithine + acetate. The protein operates within amino-acid biosynthesis; L-arginine biosynthesis; L-ornithine from N(2)-acetyl-L-ornithine (linear): step 1/1. Catalyzes the hydrolysis of the amide bond of N(2)-acetylated L-amino acids. Cleaves the acetyl group from N-acetyl-L-ornithine to form L-ornithine, an intermediate in L-arginine biosynthesis pathway, and a branchpoint in the synthesis of polyamines. The chain is Acetylornithine deacetylase from Salmonella paratyphi A (strain ATCC 9150 / SARB42).